Reading from the N-terminus, the 1063-residue chain is Retinoblastoma-like protein 1 (1063 aa).

Residues Thr332, Thr369, and Thr385 each carry the phosphothreonine modification. A domain A region spans residues 383–584 (VTTPVASATQ…WEALHASANR (202 aa)). Residues 383-944 (VTTPVASATQ…GRVKSFALKY (562 aa)) are pocket; binds T and E1A. The spacer stretch occupies residues 585-779 (VPSCEEVIFP…AQDAHLTGVS (195 aa)). Phosphoserine is present on residues Ser640, Ser650, Ser748, and Ser761. Positions 780-944 (KPKRTGSLAL…GRVKSFALKY (165 aa)) are domain B. Ser959, Ser970, and Ser983 each carry phosphoserine. A Phosphothreonine modification is found at Thr992. Phosphoserine occurs at positions 1004 and 1036.

The protein belongs to the retinoblastoma protein (RB) family. In terms of assembly, component of the DREAM complex (also named LINC complex) at least composed of E2F4, E2F5, LIN9, LIN37, LIN52, LIN54, MYBL1, MYBL2, RBL1, RBL2, RBBP4, TFDP1 and TFDP2. The complex exists in quiescent cells where it represses cell cycle-dependent genes. It dissociates in S phase when LIN9, LIN37, LIN52 and LIN54 form a subcomplex that binds to MYBL2. Interacts with AATF. Interacts with KDM5A. Interacts with KMT5B and KMT5C. Interacts with USP4. Interacts with RBBP9. In terms of processing, cell-cycle arrest properties are inactivated by phosphorylation on Thr-332, Ser-640, Ser-959 and Ser-970 by CDK4. Highly expressed in fetal heart and liver. Expressed at low levels in all other fetal tissues except skeletal muscle. High levels in neonatal spleen and thymus with low levels in other tissues. In adult, highly expressed in testis. Barely detectable in other tissues.

It localises to the nucleus. Key regulator of entry into cell division. Directly involved in heterochromatin formation by maintaining overall chromatin structure and, in particular, that of constitutive heterochromatin by stabilizing histone methylation. Recruits and targets histone methyltransferases KMT5B and KMT5C, leading to epigenetic transcriptional repression. Controls histone H4 'Lys-20' trimethylation. Probably acts as a transcription repressor by recruiting chromatin-modifying enzymes to promoters. Potent inhibitor of E2F-mediated trans-activation. May act as a tumor suppressor. In Mus musculus (Mouse), this protein is Retinoblastoma-like protein 1 (Rbl1).